The sequence spans 201 residues: Recombination protein RecR (201 aa).

The C4-type zinc finger occupies 60–75; it reads CSCCGNVDTSDPCTIC. The Toprim domain occupies 83–178; sequence ATLIVVEDVS…RVTRLAHGVP (96 aa).

Belongs to the RecR family.

May play a role in DNA repair. It seems to be involved in an RecBC-independent recombinational process of DNA repair. It may act with RecF and RecO. This chain is Recombination protein RecR, found in Brucella abortus biovar 1 (strain 9-941).